Reading from the N-terminus, the 78-residue chain is Large ribosomal subunit protein bL28 (78 aa).

The interval 1 to 23 is disordered; the sequence is MSRICQITGKKPLSGNKRSHSMN.

It belongs to the bacterial ribosomal protein bL28 family.

The protein is Large ribosomal subunit protein bL28 of Wigglesworthia glossinidia brevipalpis.